The sequence spans 323 residues: Small ribosomal subunit protein uS2 (323 aa).

The tract at residues Val295–Lys323 is disordered.

Belongs to the universal ribosomal protein uS2 family.

The polypeptide is Small ribosomal subunit protein uS2 (Mycoplasmoides gallisepticum (strain R(low / passage 15 / clone 2)) (Mycoplasma gallisepticum)).